The following is a 279-amino-acid chain: Oxygen-dependent coproporphyrinogen-III oxidase (279 aa).

Ser-102 serves as a coordination point for substrate. His-106 and His-116 together coordinate a divalent metal cation. The Proton donor role is filled by His-116. 118 to 120 serves as a coordination point for substrate; sequence NTR. His-149 and His-179 together coordinate a divalent metal cation. The segment at 244–279 is important for dimerization; sequence YVEFNLLYDRGTKFGLMTDGNVEAILMSLPPEVKFN.

It belongs to the aerobic coproporphyrinogen-III oxidase family. Homodimer. It depends on a divalent metal cation as a cofactor.

It is found in the cytoplasm. The enzyme catalyses coproporphyrinogen III + O2 + 2 H(+) = protoporphyrinogen IX + 2 CO2 + 2 H2O. It functions in the pathway porphyrin-containing compound metabolism; protoporphyrin-IX biosynthesis; protoporphyrinogen-IX from coproporphyrinogen-III (O2 route): step 1/1. Functionally, involved in the heme biosynthesis. Catalyzes the aerobic oxidative decarboxylation of propionate groups of rings A and B of coproporphyrinogen-III to yield the vinyl groups in protoporphyrinogen-IX. The sequence is that of Oxygen-dependent coproporphyrinogen-III oxidase from Rickettsia conorii (strain ATCC VR-613 / Malish 7).